A 1447-amino-acid chain; its full sequence is Sister chromatid cohesion protein PDS5 homolog B (1447 aa).

One copy of the HEAT repeat lies at 383-419 (LLVNDHLLNFVRERTLDKRWRVRKEAMMGLAQIYKKY). An N6-acetyllysine modification is found at Lys1136. The span at 1137–1155 (PLSSAGKQSQTKSSRMETV) shows a compositional bias: polar residues. The interval 1137–1447 (PLSSAGKQSQ…RRRSSKRERR (311 aa)) is disordered. A phosphoserine mark is found at Ser1140, Ser1162, Ser1166, Ser1176, Ser1182, and Ser1191. A compositionally biased stretch (low complexity) spans 1156–1167 (SNASSSSNPSSP). Residues 1172 to 1184 (GRLDSTEMDHSEN) show a composition bias toward basic and acidic residues. A compositionally biased stretch (basic and acidic residues) spans 1196–1214 (KKSDKREDSDLVRSELEKP). Ser1221 bears the Phosphoserine mark. The span at 1225 to 1243 (PEEKLGMDDLSKLVQEQKP) shows a compositional bias: basic and acidic residues. Basic residues predominate over residues 1245 to 1254 (GSQRGRKRGH). A DNA-binding region (a.T hook 1) is located at residues 1247–1259 (QRGRKRGHAASES). A phosphoserine mark is found at Ser1257 and Ser1259. Positions 1265-1274 (PEEKRHKEEL) are enriched in basic and acidic residues. Ser1283 bears the Phosphoserine mark. Residues 1287–1299 (KGKRGRPPKPLGG) constitute a DNA-binding region (a.T hook 2). Basic residues-rich tracts occupy residues 1309-1318 (TSKKGNKKKP) and 1341-1352 (KSKQQRTSKRAQ). Phosphoserine occurs at positions 1357 and 1365. The span at 1358-1371 (PETSAVESTQSTPQ) shows a compositional bias: polar residues. Position 1366 is a phosphothreonine (Thr1366). The residue at position 1368 (Ser1368) is a Phosphoserine. A phosphothreonine mark is found at Thr1369 and Thr1380. The segment at residues 1371–1383 (QKGRGRPSKTPSP) is a DNA-binding region (a.T hook 3). The span at 1378–1387 (SKTPSPSQPK) shows a compositional bias: low complexity. Phosphoserine occurs at positions 1382, 1416, and 1419. Over residues 1422 to 1432 (TTQEGAEEEDI) the composition is skewed to acidic residues. Residues 1437–1447 (VRRRSSKRERR) show a composition bias toward basic residues.

This sequence belongs to the PDS5 family. Interacts with the cohesin complex. Interacts with RAD21; the interaction is direct. Interacts with WAPL (via FGF motifs) or CDCA5 (via the FGF motif); the interaction is direct, cohesin-dependent and competitive. Highly expressed in intact prostate with levels decreasing after castration. Expressed exclusively in prostate cells inhibited from proliferating by long-term androgen exposure.

It is found in the nucleus. Functionally, regulator of sister chromatid cohesion in mitosis which may stabilize cohesin complex association with chromatin. May couple sister chromatid cohesion during mitosis to DNA replication. Cohesion ensures that chromosome partitioning is accurate in both meiotic and mitotic cells and plays an important role in DNA repair. Plays a role in androgen-induced proliferative arrest in prostate cells. This is Sister chromatid cohesion protein PDS5 homolog B (Pds5b) from Rattus norvegicus (Rat).